We begin with the raw amino-acid sequence, 116 residues long: Ribosome-binding factor A (116 aa).

This sequence belongs to the RbfA family. In terms of assembly, monomer. Binds 30S ribosomal subunits, but not 50S ribosomal subunits or 70S ribosomes.

The protein resides in the cytoplasm. In terms of biological role, one of several proteins that assist in the late maturation steps of the functional core of the 30S ribosomal subunit. Associates with free 30S ribosomal subunits (but not with 30S subunits that are part of 70S ribosomes or polysomes). Required for efficient processing of 16S rRNA. May interact with the 5'-terminal helix region of 16S rRNA. The polypeptide is Ribosome-binding factor A (Staphylococcus epidermidis (strain ATCC 35984 / DSM 28319 / BCRC 17069 / CCUG 31568 / BM 3577 / RP62A)).